The sequence spans 917 residues: Protein translocase subunit SecA (917 aa).

Residues Gln87, 105 to 109, and Asp513 contribute to the ATP site; that span reads GEGKT. Positions 834-917 are disordered; it reads EEQMNEMEKR…YKSCHGKLTG (84 aa). Positions 839 to 852 are enriched in basic and acidic residues; that stretch reads EMEKRRQEEAERQR. Over residues 862 to 876 the composition is skewed to low complexity; that stretch reads APSQLAAPATPATPE. Cys900, Cys902, Cys911, and His912 together coordinate Zn(2+).

The protein belongs to the SecA family. Monomer and homodimer. Part of the essential Sec protein translocation apparatus which comprises SecA, SecYEG and auxiliary proteins SecDF-YajC and YidC. The cofactor is Zn(2+).

It localises to the cell inner membrane. The protein resides in the cytoplasm. It carries out the reaction ATP + H2O + cellular proteinSide 1 = ADP + phosphate + cellular proteinSide 2.. Part of the Sec protein translocase complex. Interacts with the SecYEG preprotein conducting channel. Has a central role in coupling the hydrolysis of ATP to the transfer of proteins into and across the cell membrane, serving both as a receptor for the preprotein-SecB complex and as an ATP-driven molecular motor driving the stepwise translocation of polypeptide chains across the membrane. The protein is Protein translocase subunit SecA of Saccharophagus degradans (strain 2-40 / ATCC 43961 / DSM 17024).